The primary structure comprises 444 residues: Protein giant-lens (444 aa).

An N-terminal signal peptide occupies residues 1-24 (MPTTLMLLPCMLLLLLTAAAVAVG). 2 Two-fingered domain 1 part repeats span residues 123-165 (RDVR…CRCP) and 285-307 (CPSS…YKMC). Cystine bridges form between C141-C162, C147-C285, C164-C307, C316-C341, C343-C370, C378-C405, C384-C413, and C407-C440. 2 Two-fingered domain repeats span residues 316 to 370 (CTHF…LFAC) and 378 to 444 (CQRK…MAND). A glycan (N-linked (GlcNAc...) asparagine) is linked at N333.

In terms of assembly, interacts with spi. As to expression, during embryogenesis, expression is in a segmental pattern in the ectoderm and in the nervous system. In the eye imaginal disks, expression in photoreceptor cells begins a few rows posterior to the morphogenetic furrow. Also expressed in the wing disk. In the adult, expression is seen in the retina and lamina.

Its subcellular location is the secreted. Functionally, regulates cell determination; development of ommatidia and optic lobe. Is a signaling molecule involved in the process of axon pathfinding in the eye. Part of the Ras pathway regulating programmed cell death in pupal eyes; activated by lozenge (lz). Antagonist for the Egfr receptor (gurken). Inhibits Egfr signaling without interacting directly with the receptor, but instead by sequestering the Egfr-activating ligand spitz (spi). The sequence is that of Protein giant-lens (aos) from Drosophila melanogaster (Fruit fly).